The chain runs to 230 residues: Prepilin leader peptidase/N-methyltransferase (230 aa).

The next 7 helical transmembrane spans lie at 1–21 (MIYF…WFYL), 60–80 (GHIL…QIAF), 84–104 (IFTV…YLDW), 114–134 (CLWL…LLTL), 140–160 (SAAS…FYYG), 181–201 (LETL…FSLI), and 208–228 (FLPF…VKYY).

Belongs to the peptidase A24 family.

It localises to the cell inner membrane. The catalysed reaction is Typically cleaves a -Gly-|-Phe- bond to release an N-terminal, basic peptide of 5-8 residues from type IV prepilin, and then N-methylates the new N-terminal amino group, the methyl donor being S-adenosyl-L-methionine.. Plays a role in type II pseudopili formation by proteolytically removing the leader sequence from substrate proteins and subsequently monomethylating the alpha-amino group of the newly exposed N-terminal phenylalanine. Substrates include proteins required for biogenesis of the type II general secretory apparatus. This Haemophilus influenzae (strain ATCC 51907 / DSM 11121 / KW20 / Rd) protein is Prepilin leader peptidase/N-methyltransferase (hofD).